A 316-amino-acid chain; its full sequence is Acetaldehyde dehydrogenase (316 aa).

Residue 11-14 coordinates NAD(+); sequence SGNI. Cys131 (acyl-thioester intermediate) is an active-site residue. NAD(+)-binding positions include 162 to 170 and Asn289; that span reads SAGPGTRAN.

The protein belongs to the acetaldehyde dehydrogenase family. In terms of assembly, interacts with MhpE.

It carries out the reaction acetaldehyde + NAD(+) + CoA = acetyl-CoA + NADH + H(+). Its pathway is aromatic compound metabolism; 3-phenylpropanoate degradation. Its function is as follows. Catalyzes the conversion of acetaldehyde to acetyl-CoA, using NAD(+) and coenzyme A. Is the final enzyme in the meta-cleavage pathway for the degradation of aromatic compounds. The protein is Acetaldehyde dehydrogenase of Shigella sonnei (strain Ss046).